The sequence spans 416 residues: Nuclear hormone receptor family member nhr-59 (416 aa).

A DNA-binding region (nuclear receptor) is located at residues 17–94; it reads QTFCQVCGQE…IGMDIQNFQF (78 aa). 2 NR C4-type zinc fingers span residues 20–40 and 57–82; these read CQVC…CRAC and CKDG…LKKC. Residues 162-415 form the NR LBD domain; sequence TRLQKLSSSL…FSHPELVKDV (254 aa).

Belongs to the nuclear hormone receptor family.

Its subcellular location is the nucleus. Its function is as follows. Orphan nuclear receptor. This chain is Nuclear hormone receptor family member nhr-59, found in Caenorhabditis elegans.